A 92-amino-acid polypeptide reads, in one-letter code: Large ribosomal subunit protein eL43 (92 aa).

Residues 39–60 form a C4-type zinc finger; the sequence is CEFCGKYAVKRKAVGIWGCKAC.

Belongs to the eukaryotic ribosomal protein eL43 family.

The chain is Large ribosomal subunit protein eL43 (RPL37A) from Gossypium hirsutum (Upland cotton).